A 1067-amino-acid chain; its full sequence is Carbamoyl phosphate synthase large chain (1067 aa).

The tract at residues 1–401 is carboxyphosphate synthetic domain; sequence MPLNKDIKKV…AFLKGIRSLE (401 aa). ATP is bound by residues Arg129, Arg169, Gly175, Gly176, Lys208, Val210, Glu215, Gly241, Ile242, His243, Gln284, and Glu298. One can recognise an ATP-grasp 1 domain in the interval 133-327; it reads RDMMNRINQP…IAKVAAKIAL (195 aa). The Mg(2+) site is built by Gln284, Glu298, and Asn300. Residues Gln284, Glu298, and Asn300 each coordinate Mn(2+). The oligomerization domain stretch occupies residues 402–549; the sequence is IGKYSLEHKK…YSTYEQYDEV (148 aa). A carbamoyl phosphate synthetic domain region spans residues 550 to 932; sequence VVSDNKKVVV…ALYKGFVGAS (383 aa). Residues 674–864 enclose the ATP-grasp 2 domain; the sequence is DDLLERLNIA…IVDIATRIML (191 aa). ATP-binding residues include Arg710, Lys749, Leu751, Glu755, Gly780, Val781, His782, Ser783, Gln823, and Glu835. Positions 823, 835, and 837 each coordinate Mg(2+). Mn(2+) contacts are provided by Gln823, Glu835, and Asn837. The MGS-like domain maps to 933–1067; the sequence is MYTGDKGKTI…NRELEVFNLI (135 aa). Residues 933–1067 are allosteric domain; sequence MYTGDKGKTI…NRELEVFNLI (135 aa).

The protein belongs to the CarB family. Composed of two chains; the small (or glutamine) chain promotes the hydrolysis of glutamine to ammonia, which is used by the large (or ammonia) chain to synthesize carbamoyl phosphate. Tetramer of heterodimers (alpha,beta)4. It depends on Mg(2+) as a cofactor. The cofactor is Mn(2+).

The catalysed reaction is hydrogencarbonate + L-glutamine + 2 ATP + H2O = carbamoyl phosphate + L-glutamate + 2 ADP + phosphate + 2 H(+). It carries out the reaction hydrogencarbonate + NH4(+) + 2 ATP = carbamoyl phosphate + 2 ADP + phosphate + 2 H(+). It functions in the pathway amino-acid biosynthesis; L-arginine biosynthesis; carbamoyl phosphate from bicarbonate: step 1/1. The protein operates within pyrimidine metabolism; UMP biosynthesis via de novo pathway; (S)-dihydroorotate from bicarbonate: step 1/3. Large subunit of the glutamine-dependent carbamoyl phosphate synthetase (CPSase). CPSase catalyzes the formation of carbamoyl phosphate from the ammonia moiety of glutamine, carbonate, and phosphate donated by ATP, constituting the first step of 2 biosynthetic pathways, one leading to arginine and/or urea and the other to pyrimidine nucleotides. The large subunit (synthetase) binds the substrates ammonia (free or transferred from glutamine from the small subunit), hydrogencarbonate and ATP and carries out an ATP-coupled ligase reaction, activating hydrogencarbonate by forming carboxy phosphate which reacts with ammonia to form carbamoyl phosphate. In Clostridium perfringens (strain SM101 / Type A), this protein is Carbamoyl phosphate synthase large chain.